A 159-amino-acid polypeptide reads, in one-letter code: Trafficking protein particle complex subunit 6A (159 aa).

At serine 33 the chain carries Phosphoserine.

It belongs to the TRAPP small subunits family. BET3 subfamily. Part of the multisubunit transport protein particle (TRAPP) complex. Heterodimer with TRAPPC3. The heterodimer TRAPPC3-TRAPPC6A interacts with TRAPPC2L. Interacts with TRAPPC2L. Ubiquitous, with lowest expression in skeletal muscle and brain and highest in kidney, liver and testis, as well as in cultured melanocytes.

The protein localises to the golgi apparatus. The protein resides in the cis-Golgi network. Its subcellular location is the endoplasmic reticulum. In terms of biological role, may play a role in vesicular transport during the biogenesis of melanosomes. This is Trafficking protein particle complex subunit 6A from Mus musculus (Mouse).